A 283-amino-acid chain; its full sequence is Acetylglutamate kinase (283 aa).

Substrate contacts are provided by residues 63-64 (GG), Arg-85, and Asn-178.

Belongs to the acetylglutamate kinase family. ArgB subfamily.

It is found in the cytoplasm. It carries out the reaction N-acetyl-L-glutamate + ATP = N-acetyl-L-glutamyl 5-phosphate + ADP. Its pathway is amino-acid biosynthesis; L-arginine biosynthesis; N(2)-acetyl-L-ornithine from L-glutamate: step 2/4. In terms of biological role, catalyzes the ATP-dependent phosphorylation of N-acetyl-L-glutamate. This Prochlorococcus marinus (strain MIT 9515) protein is Acetylglutamate kinase.